The chain runs to 398 residues: E3 ubiquitin-protein ligase MARCHF11 (398 aa).

The span at 1–14 (MSDEGSKRGSRADS) shows a compositional bias: basic and acidic residues. Residues 1–158 (MSDEGSKRGS…GSGDQRSGHQ (158 aa)) are disordered. Pro residues predominate over residues 19–31 (PPLPPPPPPPPPG). 2 stretches are compositionally biased toward basic and acidic residues: residues 94–104 (EGPRRLPEVKL) and 121–130 (ACREGERRGT). The RING-CH-type zinc-finger motif lies at 158–218 (QHQHHQPICK…ELCCYRYHVT (61 aa)). Cys-166, Cys-169, Cys-182, Cys-184, His-192, Cys-195, Cys-208, and Cys-211 together coordinate Zn(2+). A run of 2 helical transmembrane segments spans residues 241–261 (MIAV…LLWS) and 274–294 (ILFQ…IGLI). The YXXL motif motif lies at 367–370 (YVLL). The short motif at 395-398 (VTSV) is the PDZ-binding element.

As to quaternary structure, interacts (YXXL motif) with AP1M1. Interacts (via PDZ-binding motif) with LIN7A. Interacts with unidentified fucose glycoproteins. As to expression, predominantly expressed in testis. Present in early developing spermatids. Not present in spermatogonia, spermatocytes or somatic cells (i.e. peritubular, Leydig, and Sertoli cells). Present in early round spermatids at step 4, remains until step 11, then it decreases at steps 12-15, and diminishes after step 16 (at protein level). Also expressed at lower level in brain.

The protein localises to the cytoplasmic vesicle membrane. The enzyme catalyses S-ubiquitinyl-[E2 ubiquitin-conjugating enzyme]-L-cysteine + [acceptor protein]-L-lysine = [E2 ubiquitin-conjugating enzyme]-L-cysteine + N(6)-ubiquitinyl-[acceptor protein]-L-lysine.. The protein operates within protein modification; protein ubiquitination. In terms of biological role, E3 ubiquitin-protein ligase that mediates polyubiquitination of CD4. E3 ubiquitin ligases accept ubiquitin from an E2 ubiquitin-conjugating enzyme in the form of a thioester and then directly transfer the ubiquitin to targeted substrates. May play a role in ubuquitin-dependent protein sorting in developmenting spermatids. This is E3 ubiquitin-protein ligase MARCHF11 (Marchf11) from Rattus norvegicus (Rat).